Here is a 601-residue protein sequence, read N- to C-terminus: Protein nubbin (601 aa).

Basic and acidic residues predominate over residues M1 to L25. 5 disordered regions span residues M1 to A32, S49 to Q94, K121 to S158, P351 to D425, and I581 to H601. The span at S49–S68 shows a compositional bias: low complexity. A compositionally biased stretch (polar residues) spans N135–A157. Positions T384 to A415 are enriched in low complexity. The region spanning E421 to D495 is the POU-specific domain. Positions R523–N582 form a DNA-binding region, homeobox. The segment covering A591–H601 has biased composition (acidic residues).

This sequence belongs to the POU transcription factor family. Class-2 subfamily. Initial expression in cellular blastoderm stage, then in ectodermal stripes during germband extension. Broad expression in the neuroectoderm followed by limitation to discrete subsets of CNS cells, and expression in specific PNS neurons and support cells.

The protein localises to the nucleus. In terms of biological role, DNA-binding regulatory protein implicated in early development. Involved in neuronal cell fate decision. Repressed directly or indirectly by the BX-C homeotic proteins. In Drosophila melanogaster (Fruit fly), this protein is Protein nubbin (nub).